Reading from the N-terminus, the 334-residue chain is Tryptophan--tRNA ligase (334 aa).

ATP is bound by residues 11-13 (QPT) and 19-20 (GN). The 'HIGH' region motif lies at 12–20 (PTGKLTIGN). Aspartate 135 serves as a coordination point for L-tryptophan. ATP is bound by residues 147–149 (GED), isoleucine 186, and 195–199 (KMSKS). Positions 195-199 (KMSKS) match the 'KMSKS' region motif.

This sequence belongs to the class-I aminoacyl-tRNA synthetase family. Homodimer.

The protein resides in the cytoplasm. The catalysed reaction is tRNA(Trp) + L-tryptophan + ATP = L-tryptophyl-tRNA(Trp) + AMP + diphosphate + H(+). Functionally, catalyzes the attachment of tryptophan to tRNA(Trp). This is Tryptophan--tRNA ligase from Blochmanniella floridana.